The following is a 130-amino-acid chain: Protein ApaG (130 aa).

The region spanning 3–127 is the ApaG domain; the sequence is KAETRGISVT…FSLDVPHVRR (125 aa).

The chain is Protein ApaG from Methylobacterium sp. (strain 4-46).